We begin with the raw amino-acid sequence, 182 residues long: Pentatricopeptide repeat-containing protein At2g01360 (182 aa).

3 PPR repeats span residues 30–64 (EKSAYLALAGNFLRSNELSKVIDVVKEMVKSQHSL), 65–95 (GVYHGAMLIHMLGFGRRPSLAAEALDLLPDD), and 98–132 (GLSAYTALMDVYISAGSPEKAMKILGEMREREIMP).

This sequence belongs to the PPR family. P subfamily.

This Arabidopsis thaliana (Mouse-ear cress) protein is Pentatricopeptide repeat-containing protein At2g01360.